A 130-amino-acid chain; its full sequence is Protein ApaG (130 aa).

The ApaG domain occupies 3-127 (SAVTRGIEVT…FSLDVPEQRR (125 aa)).

This is Protein ApaG from Brucella suis biovar 1 (strain 1330).